The chain runs to 284 residues: RNase adapter protein RapZ (284 aa).

8–15 (GRSGSGKS) provides a ligand contact to ATP. A GTP-binding site is contributed by 56–59 (DVRN). Positions 266-284 (RSRGKNVQSRHRTLEKRKT) are RNA-binding.

Belongs to the RapZ-like family. RapZ subfamily. Homotrimer.

Its function is as follows. Modulates the synthesis of GlmS, by affecting the processing and stability of the regulatory small RNA GlmZ. When glucosamine-6-phosphate (GlcN6P) concentrations are high in the cell, RapZ binds GlmZ and targets it to cleavage by RNase E. Consequently, GlmZ is inactivated and unable to activate GlmS synthesis. Under low GlcN6P concentrations, RapZ is sequestered and inactivated by an other regulatory small RNA, GlmY, preventing GlmZ degradation and leading to synthesis of GlmS. The sequence is that of RNase adapter protein RapZ from Citrobacter koseri (strain ATCC BAA-895 / CDC 4225-83 / SGSC4696).